Reading from the N-terminus, the 263-residue chain is Indole-3-glycerol phosphate synthase (263 aa).

This sequence belongs to the TrpC family.

It catalyses the reaction 1-(2-carboxyphenylamino)-1-deoxy-D-ribulose 5-phosphate + H(+) = (1S,2R)-1-C-(indol-3-yl)glycerol 3-phosphate + CO2 + H2O. It participates in amino-acid biosynthesis; L-tryptophan biosynthesis; L-tryptophan from chorismate: step 4/5. The sequence is that of Indole-3-glycerol phosphate synthase from Acidithiobacillus ferrooxidans (strain ATCC 23270 / DSM 14882 / CIP 104768 / NCIMB 8455) (Ferrobacillus ferrooxidans (strain ATCC 23270)).